The chain runs to 444 residues: Acyl-CoA 6-desaturase (444 aa).

The Cytoplasmic portion of the chain corresponds to 1–130 (MGKGGNQGEG…EDMNLFKTNH (130 aa)). The Cytochrome b5 heme-binding domain maps to 18 to 95 (MPTFRWEEIQ…LKPLLIGELA (78 aa)). The chain crosses the membrane as a helical span at residues 131–151 (LFFFLLLSHIIVMESIAWFIL). Residues 152-157 (SYFGNG) are Lumenal-facing. A helical transmembrane segment spans residues 158–178 (WIPTVITAFVLATSQAQAGWL). Topologically, residues 179-264 (QHDYGHLSVY…KYLPYNHQHE (86 aa)) are cytoplasmic. The Histidine box-1 motif lies at 180-184 (HDYGH). A Histidine box-2 motif is present at residues 217–221 (HFQHH). Residues 265 to 285 (YFFLIGPPLLIPMYFQYQIIM) form a helical membrane-spanning segment. Topologically, residues 286-305 (TMIRRRDWVDLAWAISYYAR) are lumenal. A helical transmembrane segment spans residues 306–326 (FFYTYIPFYGILGALVFLNFI). The Cytoplasmic segment spans residues 327-444 (RFLESHWFVW…ELWLDAYLHK (118 aa)). The Histidine box-3 signature appears at 382 to 386 (QIEHH).

This sequence belongs to the fatty acid desaturase type 1 family. In terms of tissue distribution, expressed in the liver and brain (at protein level). Highest activity is found in the liver and adrenals followed by the testes and other organs, absent in adipose tissue.

The protein localises to the endoplasmic reticulum membrane. It localises to the microsome membrane. The enzyme catalyses (9Z,12Z)-octadecadienoyl-CoA + 2 Fe(II)-[cytochrome b5] + O2 + 2 H(+) = (6Z,9Z,12Z)-octadecatrienoyl-CoA + 2 Fe(III)-[cytochrome b5] + 2 H2O. The catalysed reaction is (9Z,12Z,15Z)-octadecatrienoyl-CoA + 2 Fe(II)-[cytochrome b5] + O2 + 2 H(+) = (6Z,9Z,12Z,15Z)-octadecatetraenoyl-CoA + 2 Fe(III)-[cytochrome b5] + 2 H2O. It carries out the reaction (9Z,12Z,15Z,18Z,21Z)-tetracosapentaenoyl-CoA + 2 Fe(II)-[cytochrome b5] + O2 + 2 H(+) = (6Z,9Z,12Z,15Z,18Z,21Z)-tetracosahexaenoyl-CoA + 2 Fe(III)-[cytochrome b5] + 2 H2O. It catalyses the reaction (11E)-octadecenoyl-CoA + 2 Fe(II)-[cytochrome b5] + O2 + 2 H(+) = (6Z,11E)-octadecadienoyl-CoA + 2 Fe(III)-[cytochrome b5] + 2 H2O. The enzyme catalyses (11Z,14Z)-eicosadienoyl-CoA + 2 Fe(II)-[cytochrome b5] + O2 + 2 H(+) = (8Z,11Z,14Z)-eicosatrienoyl-CoA + 2 Fe(III)-[cytochrome b5] + 2 H2O. The catalysed reaction is (11Z,14Z,17Z)-eicosatrienoyl-CoA + 2 Fe(II)-[cytochrome b5] + O2 + 2 H(+) = (8Z,11Z,14Z,17Z)-eicosatetraenoyl-CoA + 2 Fe(III)-[cytochrome b5] + 2 H2O. It functions in the pathway lipid metabolism; polyunsaturated fatty acid biosynthesis. Involved in the biosynthesis of highly unsaturated fatty acids (HUFA) from the essential polyunsaturated fatty acids (PUFA) linoleic acid (LA) (18:2n-6) and alpha-linolenic acid (ALA) (18:3n-3) precursors, acting as a fatty acyl-coenzyme A (CoA) desaturase that introduces a cis double bond at carbon 6 of the fatty acyl chain. Catalyzes the first and rate limiting step in this pathway which is the desaturation of LA (18:2n-6) and ALA (18:3n-3) into gamma-linoleate (GLA) (18:3n-6) and stearidonate (18:4n-3), respectively. Subsequently, in the biosynthetic pathway of HUFA n-3 series, it desaturates tetracosapentaenoate (24:5n-3) to tetracosahexaenoate (24:6n-3), which is then converted to docosahexaenoate (DHA)(22:6n-3), an important lipid for nervous system function. It can also desaturate (11E)-octadecenoate (trans-vaccenoate) at carbon 6 generating (6Z,11E)-octadecadienoate. In addition to Delta-6 activity, this enzyme exhibits Delta-8 activity with slight biases toward n-3 fatty acyl-CoA substrates. The protein is Acyl-CoA 6-desaturase (Fads2) of Rattus norvegicus (Rat).